The following is a 211-amino-acid chain: Acyl-homoserine-lactone synthase (211 aa).

This sequence belongs to the autoinducer synthase family.

It carries out the reaction a fatty acyl-[ACP] + S-adenosyl-L-methionine = an N-acyl-L-homoserine lactone + S-methyl-5'-thioadenosine + holo-[ACP] + H(+). Required for the synthesis of OHHL (N-(3-oxohexanoyl)-L-homoserine lactone), an autoinducer molecule which binds to TraR and thus acts in the control of conjugal transfer. The protein is Acyl-homoserine-lactone synthase (traI) of Agrobacterium fabrum (strain C58 / ATCC 33970) (Agrobacterium tumefaciens (strain C58)).